Reading from the N-terminus, the 501-residue chain is ATP synthase subunit alpha (501 aa).

169-176 contacts ATP; that stretch reads GDRQTGKT.

Belongs to the ATPase alpha/beta chains family. F-type ATPases have 2 components, CF(1) - the catalytic core - and CF(0) - the membrane proton channel. CF(1) has five subunits: alpha(3), beta(3), gamma(1), delta(1), epsilon(1). CF(0) has three main subunits: a(1), b(2) and c(9-12). The alpha and beta chains form an alternating ring which encloses part of the gamma chain. CF(1) is attached to CF(0) by a central stalk formed by the gamma and epsilon chains, while a peripheral stalk is formed by the delta and b chains.

It localises to the cell inner membrane. The enzyme catalyses ATP + H2O + 4 H(+)(in) = ADP + phosphate + 5 H(+)(out). Functionally, produces ATP from ADP in the presence of a proton gradient across the membrane. The alpha chain is a regulatory subunit. The protein is ATP synthase subunit alpha of Campylobacter lari (strain RM2100 / D67 / ATCC BAA-1060).